We begin with the raw amino-acid sequence, 59 residues long: Preprotein translocase subunit SecG (59 aa).

The Cytoplasmic segment spans residues 1-33 (MARRESSGGSGGLMSSAGLMRYFEAEESAIKID). Residues 34–55 (PKTVIIAAVASGAFIWILNFTY) form a helical membrane-spanning segment. The Extracellular portion of the chain corresponds to 56 to 59 (GRFW).

The protein belongs to the SEC61-beta family. Component of the protein translocase complex. Heterotrimer consisting of alpha (SecY), beta (SecG) and gamma (SecE) subunits. Can form oligomers of the heterotrimer.

The protein localises to the cell membrane. In terms of biological role, involved in protein export. The function of the beta subunit is unknown, but it may be involved in stabilization of the trimeric complex. The polypeptide is Preprotein translocase subunit SecG (Methanocella arvoryzae (strain DSM 22066 / NBRC 105507 / MRE50)).